The chain runs to 43 residues: CLAVATA3/ESR (CLE)-related protein 16D10 (43 aa).

The N-terminal stretch at 1 to 30 (MFTNSIKNLIIYLMPLMVTLMLLSVSFVDA) is a signal peptide. Positions 31-43 (GKKPSGPNPGGNN) match the CLE motif.

Belongs to the CLV3/ESR signal peptide family. In terms of tissue distribution, highly expressed exclusively within the subventral esophageal gland cell during syncytium formation in host plants.

It is found in the secreted. The protein resides in the host cytoplasm. Its subcellular location is the host extracellular space. Plays a role in the differentiation or division of feeding cells (syncytia) induced in plant roots during infection. Promotes host root growth. The protein is CLAVATA3/ESR (CLE)-related protein 16D10 (16D10) of Meloidogyne arenaria (Peanut root-knot nematode).